The chain runs to 428 residues: Glutamate-1-semialdehyde 2,1-aminomutase (428 aa).

Lys265 carries the post-translational modification N6-(pyridoxal phosphate)lysine.

The protein belongs to the class-III pyridoxal-phosphate-dependent aminotransferase family. HemL subfamily. Homodimer. Pyridoxal 5'-phosphate serves as cofactor.

It is found in the cytoplasm. It carries out the reaction (S)-4-amino-5-oxopentanoate = 5-aminolevulinate. It functions in the pathway porphyrin-containing compound metabolism; protoporphyrin-IX biosynthesis; 5-aminolevulinate from L-glutamyl-tRNA(Glu): step 2/2. This Methylobacillus flagellatus (strain ATCC 51484 / DSM 6875 / VKM B-1610 / KT) protein is Glutamate-1-semialdehyde 2,1-aminomutase.